An 89-amino-acid polypeptide reads, in one-letter code: Cell division protein FtsL (89 aa).

Residues 1-6 lie on the Cytoplasmic side of the membrane; it reads MAMNKL. Residues 7 to 24 traverse the membrane as a helical segment; sequence NFLLLLAVCVSAFSVVMQ. Over 25 to 89 the chain is Periplasmic; the sequence is QNQYRLNFTA…GNTFMVEHQR (65 aa). Positions 33–73 form a coiled coil; that stretch reads TALDKAKKQEIALEQDYAQMRLQQARLANHEAIRAAAEKQN.

This sequence belongs to the FtsL family. Part of a complex composed of FtsB, FtsL and FtsQ.

It localises to the cell inner membrane. In terms of biological role, essential cell division protein. May link together the upstream cell division proteins, which are predominantly cytoplasmic, with the downstream cell division proteins, which are predominantly periplasmic. The polypeptide is Cell division protein FtsL (Neisseria meningitidis serogroup B (strain ATCC BAA-335 / MC58)).